The primary structure comprises 620 residues: 1-deoxy-D-xylulose-5-phosphate synthase (620 aa).

Thiamine diphosphate contacts are provided by residues His80 and 121-123 (GHS). Asp152 lines the Mg(2+) pocket. Residues 153–154 (GA), Asn181, Tyr288, and Glu370 contribute to the thiamine diphosphate site. Asn181 contacts Mg(2+).

The protein belongs to the transketolase family. DXPS subfamily. In terms of assembly, homodimer. Mg(2+) serves as cofactor. Requires thiamine diphosphate as cofactor.

The enzyme catalyses D-glyceraldehyde 3-phosphate + pyruvate + H(+) = 1-deoxy-D-xylulose 5-phosphate + CO2. It functions in the pathway metabolic intermediate biosynthesis; 1-deoxy-D-xylulose 5-phosphate biosynthesis; 1-deoxy-D-xylulose 5-phosphate from D-glyceraldehyde 3-phosphate and pyruvate: step 1/1. Its function is as follows. Catalyzes the acyloin condensation reaction between C atoms 2 and 3 of pyruvate and glyceraldehyde 3-phosphate to yield 1-deoxy-D-xylulose-5-phosphate (DXP). This chain is 1-deoxy-D-xylulose-5-phosphate synthase, found in Salmonella agona (strain SL483).